We begin with the raw amino-acid sequence, 123 residues long: MKHRIGRVEGEILRELTKILRKDIRDPRLSDITITAVECTNDLSYATIYYSLLTEDPAKEKEVAEGLDKAKGMMRHLLGQTLTVYKVPELIFKRDTSVAYGSKIDNLINQVKKQDQERENKNK.

Belongs to the RbfA family. As to quaternary structure, monomer. Binds 30S ribosomal subunits, but not 50S ribosomal subunits or 70S ribosomes.

It is found in the cytoplasm. Its function is as follows. One of several proteins that assist in the late maturation steps of the functional core of the 30S ribosomal subunit. Associates with free 30S ribosomal subunits (but not with 30S subunits that are part of 70S ribosomes or polysomes). Required for efficient processing of 16S rRNA. May interact with the 5'-terminal helix region of 16S rRNA. The sequence is that of Ribosome-binding factor A from Lactobacillus gasseri (strain ATCC 33323 / DSM 20243 / BCRC 14619 / CIP 102991 / JCM 1131 / KCTC 3163 / NCIMB 11718 / NCTC 13722 / AM63).